Here is a 483-residue protein sequence, read N- to C-terminus: Triplex capsid protein 1 (483 aa).

The short motif at 24 to 40 is the RIP homotypic interaction motif (RHIM) element; it reads LLGNNRFIQIGNGLHMT.

Belongs to the herpesviridae TRX1 protein family. Interacts with TRX2, MCP and capsid vertex component 2/CVC2. Self-assembles into homo-oligomeric amyloid fibrils. Interacts with host ZBP1; this interaction prevents host necroptosis and extrinsic apoptosis. Interacts with host RIPK3.

The protein localises to the virion. The protein resides in the host nucleus. Structural component of the T=16 icosahedral capsid. The capsid is composed of pentamers and hexamers of major capsid protein/MCP, which are linked together by heterotrimers called triplexes. These triplexes are formed by a single molecule of triplex protein 1/TRX1 and two copies of triplex protein 2/TRX2. Additionally, TRX1 is required for efficient transport of TRX2 to the nucleus, which is the site of capsid assembly. Also prevents necroptosis and extrinsic apoptosis by sequestering host ZBP1 into large, insoluble supercomplexes and impairing its ability to interact with RIPK3. The polypeptide is Triplex capsid protein 1 (Varicella-zoster virus (strain Dumas) (HHV-3)).